Here is a 272-residue protein sequence, read N- to C-terminus: Acetylglutamate kinase (272 aa).

Residues 46–47, arginine 68, and asparagine 166 each bind substrate; that span reads GA.

This sequence belongs to the acetylglutamate kinase family. ArgB subfamily.

It localises to the cytoplasm. It catalyses the reaction N-acetyl-L-glutamate + ATP = N-acetyl-L-glutamyl 5-phosphate + ADP. It functions in the pathway amino-acid biosynthesis; L-arginine biosynthesis; N(2)-acetyl-L-ornithine from L-glutamate: step 2/4. Its function is as follows. Catalyzes the ATP-dependent phosphorylation of N-acetyl-L-glutamate. The chain is Acetylglutamate kinase from Dehalococcoides mccartyi (strain CBDB1).